The sequence spans 245 residues: tRNA (guanine-N(1)-)-methyltransferase (245 aa).

S-adenosyl-L-methionine contacts are provided by residues Gly-113 and Ile-133–Leu-138.

It belongs to the RNA methyltransferase TrmD family. In terms of assembly, homodimer.

It is found in the cytoplasm. The catalysed reaction is guanosine(37) in tRNA + S-adenosyl-L-methionine = N(1)-methylguanosine(37) in tRNA + S-adenosyl-L-homocysteine + H(+). Its function is as follows. Specifically methylates guanosine-37 in various tRNAs. The protein is tRNA (guanine-N(1)-)-methyltransferase of Actinobacillus succinogenes (strain ATCC 55618 / DSM 22257 / CCUG 43843 / 130Z).